We begin with the raw amino-acid sequence, 206 residues long: 3-demethoxyubiquinol 3-hydroxylase (206 aa).

Fe cation is bound by residues Glu55, Glu85, His88, Glu137, Glu169, and His172.

Belongs to the COQ7 family. It depends on Fe cation as a cofactor.

The protein resides in the cell membrane. It catalyses the reaction a 5-methoxy-2-methyl-3-(all-trans-polyprenyl)benzene-1,4-diol + AH2 + O2 = a 3-demethylubiquinol + A + H2O. It functions in the pathway cofactor biosynthesis; ubiquinone biosynthesis. Functionally, catalyzes the hydroxylation of 2-nonaprenyl-3-methyl-6-methoxy-1,4-benzoquinol during ubiquinone biosynthesis. The protein is 3-demethoxyubiquinol 3-hydroxylase of Aromatoleum aromaticum (strain DSM 19018 / LMG 30748 / EbN1) (Azoarcus sp. (strain EbN1)).